Here is a 205-residue protein sequence, read N- to C-terminus: Listeria nuclear targeted protein A (205 aa).

Residues 1-36 form the signal peptide; it reads MKKLVAWFNGLSKMWKVVVIIGAVFVVIIALTTGED.

As to quaternary structure, interacts specifically with host BAHD1.

It is found in the secreted. The protein localises to the host nucleus. In terms of biological role, relieves the repression of host cell immune response genes (interferon-stimulated genes) by blocking the recruitment of host BAHD1 to these genes. May modulate interferon-mediated immune response to control bacterial colonization of the host. The chain is Listeria nuclear targeted protein A (lntA) from Listeria monocytogenes serovar 1/2a (strain ATCC BAA-679 / EGD-e).